The sequence spans 207 residues: Dephospho-CoA kinase (207 aa).

One can recognise a DPCK domain in the interval 10 to 207; the sequence is ILGLTGGIGS…FYLTLSGGQS (198 aa). 18-23 provides a ligand contact to ATP; that stretch reads GSGKSA.

Belongs to the CoaE family.

The protein localises to the cytoplasm. The catalysed reaction is 3'-dephospho-CoA + ATP = ADP + CoA + H(+). The protein operates within cofactor biosynthesis; coenzyme A biosynthesis; CoA from (R)-pantothenate: step 5/5. Catalyzes the phosphorylation of the 3'-hydroxyl group of dephosphocoenzyme A to form coenzyme A. The chain is Dephospho-CoA kinase from Pseudomonas fluorescens (strain Pf0-1).